The chain runs to 101 residues: ATP synthase subunit c (101 aa).

2 helical membrane-spanning segments follow: residues 31 to 51 and 81 to 101; these read AFAY…GAGQ and AISE…IFVG.

It belongs to the ATPase C chain family. F-type ATPases have 2 components, F(1) - the catalytic core - and F(0) - the membrane proton channel. F(1) has five subunits: alpha(3), beta(3), gamma(1), delta(1), epsilon(1). F(0) has three main subunits: a(1), b(2) and c(10-14). The alpha and beta chains form an alternating ring which encloses part of the gamma chain. F(1) is attached to F(0) by a central stalk formed by the gamma and epsilon chains, while a peripheral stalk is formed by the delta and b chains.

Its subcellular location is the cell membrane. In terms of biological role, f(1)F(0) ATP synthase produces ATP from ADP in the presence of a proton or sodium gradient. F-type ATPases consist of two structural domains, F(1) containing the extramembraneous catalytic core and F(0) containing the membrane proton channel, linked together by a central stalk and a peripheral stalk. During catalysis, ATP synthesis in the catalytic domain of F(1) is coupled via a rotary mechanism of the central stalk subunits to proton translocation. Functionally, key component of the F(0) channel; it plays a direct role in translocation across the membrane. A homomeric c-ring of between 10-14 subunits forms the central stalk rotor element with the F(1) delta and epsilon subunits. This is ATP synthase subunit c from Mesomycoplasma hyopneumoniae (strain 7448) (Mycoplasma hyopneumoniae).